A 190-amino-acid polypeptide reads, in one-letter code: GTP cyclohydrolase 1 (190 aa).

Zn(2+) contacts are provided by Cys-78, His-81, and Cys-150.

The protein belongs to the GTP cyclohydrolase I family. In terms of assembly, toroid-shaped homodecamer, composed of two pentamers of five dimers.

It catalyses the reaction GTP + H2O = 7,8-dihydroneopterin 3'-triphosphate + formate + H(+). The protein operates within cofactor biosynthesis; 7,8-dihydroneopterin triphosphate biosynthesis; 7,8-dihydroneopterin triphosphate from GTP: step 1/1. Its activity is regulated as follows. K(+) ions moderately increases the Vmax, whereas UTP and Ca(2+) and Mg(2+) ions drastically increase the Km for GTP. In Bacillus subtilis (strain 168), this protein is GTP cyclohydrolase 1 (folE).